Consider the following 271-residue polypeptide: Bis(5'-nucleosyl)-tetraphosphatase, symmetrical (271 aa).

This sequence belongs to the Ap4A hydrolase family.

The catalysed reaction is P(1),P(4)-bis(5'-adenosyl) tetraphosphate + H2O = 2 ADP + 2 H(+). Hydrolyzes diadenosine 5',5'''-P1,P4-tetraphosphate to yield ADP. The sequence is that of Bis(5'-nucleosyl)-tetraphosphatase, symmetrical from Aliivibrio fischeri (strain ATCC 700601 / ES114) (Vibrio fischeri).